We begin with the raw amino-acid sequence, 1044 residues long: Probable translation initiation factor IF-2 (1044 aa).

The DOD-type homing endonuclease domain occupies 173 to 265 (FAGTIFGREN…LSLILLRLGI (93 aa)). Residues 451 to 668 (TTETHNFIAN…LIAGLSQKYL (218 aa)) form the tr-type G domain. GTP-binding positions include 524–528 (DTPGH) and 578–581 (NKID).

This sequence belongs to the TRAFAC class translation factor GTPase superfamily. Classic translation factor GTPase family. IF-2 subfamily. This protein undergoes a protein self splicing that involves a post-translational excision of the intervening region (intein) followed by peptide ligation.

Function in general translation initiation by promoting the binding of the formylmethionine-tRNA to ribosomes. Seems to function along with eIF-2. This is Probable translation initiation factor IF-2 (infB) from Pyrococcus horikoshii (strain ATCC 700860 / DSM 12428 / JCM 9974 / NBRC 100139 / OT-3).